Here is a 270-residue protein sequence, read N- to C-terminus: MTATPETATNRGVQRLHAAFARAEAEGRAAFIPFMTGGYPDAARFGEVAGDLLARADIMEVGIPYSDPLGDGPTIQRASEQALAGGTSTRRTLELVRELRQKDDTPIVIMTYINPIYAVGPAEFMRLAQEAGVDGLILPDLPPDQDLEIADLAAQHGLAVTFLIAPTSTPERVKLVAEACTGFLYAVSVTGVTGAREGAALGEVPRMLDLARQYAQRPVVVGFGVKDAATAQQVAQVADGVVVGSAFINAVAAGRDVGALADELAAGCRR.

Active-site proton acceptor residues include Glu60 and Asp71.

Belongs to the TrpA family. As to quaternary structure, tetramer of two alpha and two beta chains.

The enzyme catalyses (1S,2R)-1-C-(indol-3-yl)glycerol 3-phosphate + L-serine = D-glyceraldehyde 3-phosphate + L-tryptophan + H2O. The protein operates within amino-acid biosynthesis; L-tryptophan biosynthesis; L-tryptophan from chorismate: step 5/5. Functionally, the alpha subunit is responsible for the aldol cleavage of indoleglycerol phosphate to indole and glyceraldehyde 3-phosphate. The protein is Tryptophan synthase alpha chain of Deinococcus radiodurans (strain ATCC 13939 / DSM 20539 / JCM 16871 / CCUG 27074 / LMG 4051 / NBRC 15346 / NCIMB 9279 / VKM B-1422 / R1).